We begin with the raw amino-acid sequence, 666 residues long: Nuclear distribution protein nudE homolog 1 (666 aa).

Positions 14–195 form a coiled coil; sequence EEEIAHYREK…KDQLARAIAT (182 aa). Disordered stretches follow at residues 40 to 64, 220 to 310, 369 to 388, and 397 to 666; these read EFQQSSKELEDEMEQELAANDKQQA, DDIN…SGIP, KRVTSTTSTTSSTTTAPAPH, and DHNT…KVKK. Residues 251-274 show a composition bias toward polar residues; that stretch reads RSGTMSSIPVASPSTKRFSQQIPH. Composition is skewed to low complexity over residues 275 to 287 and 372 to 383; these read SPSFSTLSRSTTS and TSTTSTTSSTTT. Over residues 400–410 the composition is skewed to polar residues; sequence TTPTAQSQQFP. Low complexity-rich tracts occupy residues 449–465, 473–485, and 536–554; these read PTFRSSSTTSNRSLPSR, ASGSARSTTSGTA, and SATPTSGFSSFSASASTSN. Composition is skewed to polar residues over residues 587-599 and 614-638; these read RQSLSGAGPTPTT and SSLSNMDKPSLMSASSGSRTPSGRP.

The protein belongs to the nudE family. In terms of assembly, self-associates. Interacts with PAC1.

The protein resides in the cytoplasm. The protein localises to the cytoskeleton. Functionally, required for nuclear migration. The sequence is that of Nuclear distribution protein nudE homolog 1 (NDE1) from Cryptococcus neoformans var. neoformans serotype D (strain JEC21 / ATCC MYA-565) (Filobasidiella neoformans).